A 268-amino-acid chain; its full sequence is Magnesium dechelatase SGR1, chloroplastic (268 aa).

Residues 1–48 (MCSLSAIMLLPTKLKPAYSDKRSNSSSSSSLFFNNRRSKKKNQSIVPV) constitute a chloroplast transit peptide.

It belongs to the staygreen family. In terms of assembly, interacts with HCAR, the chlorophyll catabolic enzymes (CCEs) NYC1, PAO and RCCR, and the LHCII complex. Part of a SGR1-CCE-LHCII complex, which acts in chlorophyll breakdown. Expressed in roots, leaves, seeds, flowers, buds, petals, sepals and siliques.

The protein resides in the plastid. It localises to the chloroplast thylakoid membrane. The enzyme catalyses chlorophyll a + 2 H(+) = pheophytin a + Mg(2+). In terms of biological role, magnesium chelatase involved in chlorophyll a degradation in the chlorophyll-protein complexes of photosystem I (PSI) and photosystem II (PSII). Contributes to the degradation of PSI and PSII in the thylakoid membranes. Required to trigger chlorophyll degradation during natural and dark-induced leaf senescence. Mediates chlorophyll degradation during embryo degreening. Recombinant SGR1 possesses high dechelating activity against chlorophyll a, very low activity against chlorophyllide a, and no activity against chlorophyll b. Magnesium dechelation of chlorophyll a by SGR1 activates chlorophyll b degradation by inducing the expression of NYC1, an enzyme involved in chlorophyll b degradation. This Arabidopsis thaliana (Mouse-ear cress) protein is Magnesium dechelatase SGR1, chloroplastic.